The primary structure comprises 276 residues: ATP synthase subunit a (276 aa).

7 consecutive transmembrane segments (helical) span residues Lys-49–Ala-69, Tyr-109–Ile-129, Ser-137–Ser-157, Gly-173–Val-193, Phe-203–Ile-223, Ala-232–Ile-252, and Gln-253–Ala-273.

Belongs to the ATPase A chain family. In terms of assembly, F-type ATPases have 2 components, CF(1) - the catalytic core - and CF(0) - the membrane proton channel. CF(1) has five subunits: alpha(3), beta(3), gamma(1), delta(1), epsilon(1). CF(0) has three main subunits: a(1), b(2) and c(9-12). The alpha and beta chains form an alternating ring which encloses part of the gamma chain. CF(1) is attached to CF(0) by a central stalk formed by the gamma and epsilon chains, while a peripheral stalk is formed by the delta and b chains.

The protein localises to the cell membrane. Its function is as follows. Key component of the proton channel; it plays a direct role in the translocation of protons across the membrane. This is ATP synthase subunit a from Nocardioides sp. (strain ATCC BAA-499 / JS614).